Here is a 251-residue protein sequence, read N- to C-terminus: Triosephosphate isomerase (251 aa).

9-11 lines the substrate pocket; that stretch reads NWK. Histidine 96 (electrophile) is an active-site residue. Glutamate 167 acts as the Proton acceptor in catalysis. Residues glycine 173, serine 213, and 234 to 235 each bind substrate; that span reads GG.

The protein belongs to the triosephosphate isomerase family. As to quaternary structure, homodimer.

Its subcellular location is the cytoplasm. The enzyme catalyses D-glyceraldehyde 3-phosphate = dihydroxyacetone phosphate. Its pathway is carbohydrate biosynthesis; gluconeogenesis. The protein operates within carbohydrate degradation; glycolysis; D-glyceraldehyde 3-phosphate from glycerone phosphate: step 1/1. In terms of biological role, involved in the gluconeogenesis. Catalyzes stereospecifically the conversion of dihydroxyacetone phosphate (DHAP) to D-glyceraldehyde-3-phosphate (G3P). The sequence is that of Triosephosphate isomerase from Bacteroides fragilis (strain ATCC 25285 / DSM 2151 / CCUG 4856 / JCM 11019 / LMG 10263 / NCTC 9343 / Onslow / VPI 2553 / EN-2).